A 234-amino-acid polypeptide reads, in one-letter code: Leucyl/phenylalanyl-tRNA--protein transferase (234 aa).

Belongs to the L/F-transferase family.

It localises to the cytoplasm. The enzyme catalyses N-terminal L-lysyl-[protein] + L-leucyl-tRNA(Leu) = N-terminal L-leucyl-L-lysyl-[protein] + tRNA(Leu) + H(+). The catalysed reaction is N-terminal L-arginyl-[protein] + L-leucyl-tRNA(Leu) = N-terminal L-leucyl-L-arginyl-[protein] + tRNA(Leu) + H(+). It carries out the reaction L-phenylalanyl-tRNA(Phe) + an N-terminal L-alpha-aminoacyl-[protein] = an N-terminal L-phenylalanyl-L-alpha-aminoacyl-[protein] + tRNA(Phe). Functionally, functions in the N-end rule pathway of protein degradation where it conjugates Leu, Phe and, less efficiently, Met from aminoacyl-tRNAs to the N-termini of proteins containing an N-terminal arginine or lysine. The protein is Leucyl/phenylalanyl-tRNA--protein transferase of Escherichia coli O81 (strain ED1a).